A 188-amino-acid chain; its full sequence is Peptidyl-tRNA hydrolase (188 aa).

Y14 lines the tRNA pocket. Residue H19 is the Proton acceptor of the active site. TRNA contacts are provided by Y64, N66, and N112.

Belongs to the PTH family. As to quaternary structure, monomer.

The protein resides in the cytoplasm. The catalysed reaction is an N-acyl-L-alpha-aminoacyl-tRNA + H2O = an N-acyl-L-amino acid + a tRNA + H(+). In terms of biological role, hydrolyzes ribosome-free peptidyl-tRNAs (with 1 or more amino acids incorporated), which drop off the ribosome during protein synthesis, or as a result of ribosome stalling. Its function is as follows. Catalyzes the release of premature peptidyl moieties from peptidyl-tRNA molecules trapped in stalled 50S ribosomal subunits, and thus maintains levels of free tRNAs and 50S ribosomes. This chain is Peptidyl-tRNA hydrolase, found in Clostridium perfringens (strain SM101 / Type A).